A 137-amino-acid chain; its full sequence is Large ribosomal subunit protein eL28 (137 aa).

The residue at position 2 (Ser2) is an N-acetylserine. Glycyl lysine isopeptide (Lys-Gly) (interchain with G-Cter in SUMO2) cross-links involve residues Lys58 and Lys65. The residue at position 115 (Ser115) is a Phosphoserine.

Belongs to the eukaryotic ribosomal protein eL28 family. Component of the large ribosomal subunit.

The protein localises to the cytoplasm. Its function is as follows. Component of the large ribosomal subunit. The ribosome is a large ribonucleoprotein complex responsible for the synthesis of proteins in the cell. This Oryctolagus cuniculus (Rabbit) protein is Large ribosomal subunit protein eL28 (RPL28).